Reading from the N-terminus, the 127-residue chain is Large ribosomal subunit protein bL12 (127 aa).

This sequence belongs to the bacterial ribosomal protein bL12 family. Homodimer. Part of the ribosomal stalk of the 50S ribosomal subunit. Forms a multimeric L10(L12)X complex, where L10 forms an elongated spine to which 2 to 4 L12 dimers bind in a sequential fashion. Binds GTP-bound translation factors.

Forms part of the ribosomal stalk which helps the ribosome interact with GTP-bound translation factors. Is thus essential for accurate translation. The chain is Large ribosomal subunit protein bL12 from Streptomyces avermitilis (strain ATCC 31267 / DSM 46492 / JCM 5070 / NBRC 14893 / NCIMB 12804 / NRRL 8165 / MA-4680).